The chain runs to 547 residues: Glucose-6-phosphate isomerase (547 aa).

Residue glutamate 351 is the Proton donor of the active site. Catalysis depends on residues histidine 382 and lysine 511.

This sequence belongs to the GPI family.

The protein resides in the cytoplasm. It carries out the reaction alpha-D-glucose 6-phosphate = beta-D-fructose 6-phosphate. It participates in carbohydrate biosynthesis; gluconeogenesis. It functions in the pathway carbohydrate degradation; glycolysis; D-glyceraldehyde 3-phosphate and glycerone phosphate from D-glucose: step 2/4. Its function is as follows. Catalyzes the reversible isomerization of glucose-6-phosphate to fructose-6-phosphate. This chain is Glucose-6-phosphate isomerase, found in Xanthobacter autotrophicus (strain ATCC BAA-1158 / Py2).